Consider the following 467-residue polypeptide: Zinc finger and BTB domain-containing protein 43 (467 aa).

Met-1 carries the post-translational modification N-acetylmethionine. A BTB domain is found at 33–97 (CDVSIVVQGH…SYTGRLVMPA (65 aa)). Disordered regions lie at residues 134 to 153 (LNHGSDHQSPSSSNYNGLVE) and 162 to 227 (HTDF…EFHY). Polar residues predominate over residues 140 to 149 (HQSPSSSNYN). 2 stretches are compositionally biased toward basic and acidic residues: residues 164-174 (DFPKAQELRDG) and 182-194 (KDELSSQVTEHEY). Glycyl lysine isopeptide (Lys-Gly) (interchain with G-Cter in SUMO2) cross-links involve residues Lys-182, Lys-247, Lys-297, and Lys-358. The segment at 373–394 (YPCQCGKSFTHKSQRDRHMSMH) adopts a C2H2-type 1; atypical zinc-finger fold. The C2H2-type 2 zinc finger occupies 400–422 (YGCSVCGKKFKMKHHLVGHMKIH). A Phosphothreonine modification is found at Thr-423. A C2H2-type 3; atypical zinc finger spans residues 428 to 450 (YECNICAKRFMWRDSFHRHVTSC). Lys-458 participates in a covalent cross-link: Glycyl lysine isopeptide (Lys-Gly) (interchain with G-Cter in SUMO2).

Belongs to the krueppel C2H2-type zinc-finger protein family. Interacts with BDP1.

Its subcellular location is the nucleus. May be involved in transcriptional regulation. In Mus musculus (Mouse), this protein is Zinc finger and BTB domain-containing protein 43 (Zbtb43).